The chain runs to 146 residues: Large ribosomal subunit protein uL15 (146 aa).

The tract at residues 1 to 46 (MKLHELQPAPGSRKKAVRVGRGIGSGNGKTAGRGHKGQKARSGGGV) is disordered. Gly residues predominate over residues 21–31 (RGIGSGNGKTA).

The protein belongs to the universal ribosomal protein uL15 family. Part of the 50S ribosomal subunit.

In terms of biological role, binds to the 23S rRNA. This is Large ribosomal subunit protein uL15 from Geobacillus thermodenitrificans (strain NG80-2).